The sequence spans 183 residues: Large ribosomal subunit protein bL32m (183 aa).

Zn(2+) contacts are provided by Cys-99, Cys-102, Cys-112, and Cys-115.

This sequence belongs to the bacterial ribosomal protein bL32 family. Component of the mitochondrial large ribosomal subunit (mt-LSU).

Its subcellular location is the mitochondrion. In terms of biological role, component of the mitochondrial large ribosomal subunit (mt-LSU). The mitochondrial ribosome (mitoribosome) is a large ribonucleoprotein complex responsible for the synthesis of proteins inside mitochondria. In Caenorhabditis elegans, this protein is Large ribosomal subunit protein bL32m (mrpl-32).